Here is a 133-residue protein sequence, read N- to C-terminus: Classical arabinogalactan protein 5 (133 aa).

An N-terminal signal peptide occupies residues 1-21 (MASKSVVVFLFLALVASSVVA). Residue Q22 is modified to Pyrrolidone carboxylic acid. Residues 23–110 (APGPAPTISP…QSPLSGSPNA (88 aa)) are disordered. A compositionally biased stretch (pro residues) spans 25–37 (GPAPTISPLPATP). Over residues 38–48 (TPSQSPRATAP) the composition is skewed to low complexity. Residues 49–81 (APSPSANPPPSAPTTAPPVSQPPTESPPAPPTS) are compositionally biased toward pro residues. A lipid anchor (GPI-anchor amidated asparagine) is attached at N109. Residues 110–133 (AAAVSRVSLVGTFAGVAVIAALLL) constitute a propeptide, removed in mature form.

The protein belongs to the classical AGP family. O-glycosylated on the hydroxyproline residues. In terms of tissue distribution, expressed at a low level in flowers and siliques.

The protein resides in the cell membrane. In terms of biological role, proteoglycan that seems to be implicated in diverse developmental roles such as differentiation, cell-cell recognition, embryogenesis and programmed cell death. The chain is Classical arabinogalactan protein 5 (AGP5) from Arabidopsis thaliana (Mouse-ear cress).